We begin with the raw amino-acid sequence, 60 residues long: UPF0434 protein ESA_02427 (60 aa).

The protein belongs to the UPF0434 family.

The sequence is that of UPF0434 protein ESA_02427 from Cronobacter sakazakii (strain ATCC BAA-894) (Enterobacter sakazakii).